The primary structure comprises 165 residues: Secreted acidic protein 2 (165 aa).

2 stretches are compositionally biased toward acidic residues: residues 1 to 58 (WSXS…DDSG) and 80 to 102 (ESSD…DAYN). The segment at 1-112 (WSXSGDDDDD…DDSQAGELNS (112 aa)) is disordered. Polar residues predominate over residues 103–112 (DDSQAGELNS).

As to expression, component of the acid-insoluble and acid-soluble organic matrix of the aragonitic skeleton (at protein level).

Its subcellular location is the secreted. The polypeptide is Secreted acidic protein 2 (Acropora millepora (Staghorn coral)).